Here is a 930-residue protein sequence, read N- to C-terminus: Nonribosomal peptide synthetase acyN (930 aa).

The tract at residues 15–436 (LDPQDNKISV…AGRAKETIIV (422 aa)) is adenylation (A) domain. The Carrier domain occupies 567–646 (APSNETEATI…GLAGTLETLM (80 aa)). O-(pantetheine 4'-phosphoryl)serine is present on Ser604. Positions 665 to 914 (PLWLVHPGVG…HYTMLGPDNI (250 aa)) are thioesterase (TE) domain.

This sequence belongs to the NRP synthetase family.

It catalyses the reaction 2 3-phenylpyruvate + 2 ATP = polyporic acid + 2 AMP + 2 diphosphate + H(+). Its pathway is secondary metabolite biosynthesis. With respect to regulation, hydroxyphenylpyruvate acts more like a competitive inhibitor rather than a substrate. Functionally, nonribosomal peptide synthetase that mediates the biosynthesis of polyporic acid via the condensation of 2 phenylpyruvate units. Polyporic acid is further hydroxylaed by the cytochrome P450 monooxygenase MO6277 into less toxic ascocorynin. This chain is Nonribosomal peptide synthetase acyN, found in Ascocoryne sarcoides (Purple jellydisc fungus).